The sequence spans 181 residues: Inner membrane-spanning protein YciB (181 aa).

Helical transmembrane passes span 10–30, 50–70, 72–92, 118–138, and 148–168; these read LIIFFAVYKFFDIYVASGALI, MHLITFVMVTVFGSLTLILHD, SFIKWKVTIVYALFAIALGVS, VTWYWVSFFVVCGLVNIYVAF, and FKVFGLTALTLINTVLTVLYL.

It belongs to the YciB family.

Its subcellular location is the cell inner membrane. Its function is as follows. Plays a role in cell envelope biogenesis, maintenance of cell envelope integrity and membrane homeostasis. In Shewanella halifaxensis (strain HAW-EB4), this protein is Inner membrane-spanning protein YciB.